The primary structure comprises 264 residues: Forkhead box protein pes-1 (264 aa).

Disordered regions lie at residues 15-36 (DLDN…GNSK) and 50-93 (DSST…PTKR). A compositionally biased stretch (low complexity) spans 50-64 (DSSTSSSCSVSPASS). Residues 70–89 (ESVGQQQSGRNSPVSSSTES) are compositionally biased toward polar residues. A DNA-binding region (fork-head) is located at residues 93-186 (RPKYSYNALI…ISNNCGKLRR (94 aa)).

The protein localises to the nucleus. The protein resides in the cytoplasm. Transcription factor. Plays a role in embryogenesis and later development, perhaps acting redundantly with forkhead protein fkh-2. The sequence is that of Forkhead box protein pes-1 from Caenorhabditis elegans.